A 511-amino-acid polypeptide reads, in one-letter code: U3 snoRNP-associated protein-like YAOH (511 aa).

Positions 1–18 (MAPRPRKRVSRPKPRATS) are enriched in basic residues. Residues 1–117 (MAPRPRKRVS…EDEDEGEEAG (117 aa)) are disordered. Composition is skewed to acidic residues over residues 44-53 (EDIESEDSDL) and 66-80 (DDGE…EQET). Residues 81–105 (AGEKKMRIAKELLKKVTDAARRRRE) show a composition bias toward basic and acidic residues. WD repeat units lie at residues 158–197 (KHRQ…SEKY), 217–256 (KRSK…HIQA), 259–298 (GHRG…YMNC), 301–339 (GHQN…QLLF), 342–380 (PATA…PTHI), 412–451 (SAQS…KGIR), and 457–497 (RLDG…QNGV).

This sequence belongs to the WD repeat RRP9 family.

Its subcellular location is the nucleus. It localises to the nucleolus. In terms of biological role, component of a nucleolar small nuclear ribonucleoprotein particle (snoRNP) thought to participate in the processing and modification of pre-ribosomal RNA. Essential for embryogenesis. The protein is U3 snoRNP-associated protein-like YAOH of Oryza sativa subsp. japonica (Rice).